Reading from the N-terminus, the 475-residue chain is Aspartyl/glutamyl-tRNA(Asn/Gln) amidotransferase subunit B (475 aa).

The protein belongs to the GatB/GatE family. GatB subfamily. In terms of assembly, heterotrimer of A, B and C subunits.

The catalysed reaction is L-glutamyl-tRNA(Gln) + L-glutamine + ATP + H2O = L-glutaminyl-tRNA(Gln) + L-glutamate + ADP + phosphate + H(+). The enzyme catalyses L-aspartyl-tRNA(Asn) + L-glutamine + ATP + H2O = L-asparaginyl-tRNA(Asn) + L-glutamate + ADP + phosphate + 2 H(+). Allows the formation of correctly charged Asn-tRNA(Asn) or Gln-tRNA(Gln) through the transamidation of misacylated Asp-tRNA(Asn) or Glu-tRNA(Gln) in organisms which lack either or both of asparaginyl-tRNA or glutaminyl-tRNA synthetases. The reaction takes place in the presence of glutamine and ATP through an activated phospho-Asp-tRNA(Asn) or phospho-Glu-tRNA(Gln). This Thermoanaerobacter sp. (strain X514) protein is Aspartyl/glutamyl-tRNA(Asn/Gln) amidotransferase subunit B.